A 524-amino-acid chain; its full sequence is Peptide chain release factor 3 (524 aa).

A tr-type G domain is found at 10-278; that stretch reads DSRRTFAIIS…TFLQFAPAPH (269 aa). Residues 19–26, 87–91, and 141–144 contribute to the GTP site; these read SHPDAGKT, DTPGH, and NKLD.

This sequence belongs to the TRAFAC class translation factor GTPase superfamily. Classic translation factor GTPase family. PrfC subfamily.

Its subcellular location is the cytoplasm. Its function is as follows. Increases the formation of ribosomal termination complexes and stimulates activities of RF-1 and RF-2. It binds guanine nucleotides and has strong preference for UGA stop codons. It may interact directly with the ribosome. The stimulation of RF-1 and RF-2 is significantly reduced by GTP and GDP, but not by GMP. The protein is Peptide chain release factor 3 of Enterococcus faecalis (strain ATCC 700802 / V583).